A 234-amino-acid polypeptide reads, in one-letter code: UPF0502 protein Bphyt_5265 (234 aa).

Belongs to the UPF0502 family.

The protein is UPF0502 protein Bphyt_5265 of Paraburkholderia phytofirmans (strain DSM 17436 / LMG 22146 / PsJN) (Burkholderia phytofirmans).